We begin with the raw amino-acid sequence, 137 residues long: Large ribosomal subunit protein bL17 (137 aa).

Belongs to the bacterial ribosomal protein bL17 family. In terms of assembly, part of the 50S ribosomal subunit. Contacts protein L32.

This chain is Large ribosomal subunit protein bL17, found in Caulobacter sp. (strain K31).